A 393-amino-acid polypeptide reads, in one-letter code: Seven-bladed beta-propeller protein Rv1057 (393 aa).

Residues 208–230 (DGGRIGSRSRSRQKSSKPRGNQA) are disordered. Residues 214–224 (SRSRSRQKSSK) show a composition bias toward basic residues.

Its function is as follows. May play an important role in host-pathogen interactions and in ESAT-6 secretion. This is Seven-bladed beta-propeller protein Rv1057 from Mycobacterium tuberculosis (strain ATCC 25618 / H37Rv).